A 352-amino-acid chain; its full sequence is B1 bradykinin receptor (352 aa).

The Extracellular portion of the chain corresponds to 1 to 41 (MASWPPLELQSSNQSQLFPQNATACDNAPEAWDLLHRVLPT). N-linked (GlcNAc...) asparagine glycosylation is found at Asn13 and Asn21. Residues 42-62 (FIISICSFGLLGNLFVLLVFL) form a helical membrane-spanning segment. Residues 63–72 (LPRRRLNVAE) lie on the Cytoplasmic side of the membrane. Residues 73–93 (IYLANLAASDLVFVLGLPFWA) form a helical membrane-spanning segment. The Extracellular segment spans residues 94–110 (ENIWNQFNWPFGALLCR). An intrachain disulfide couples Cys109 to Cys188. The helical transmembrane segment at 111–131 (GINGVIKANLFISIFLVVAIS) threads the bilayer. Residues 132 to 153 (QDRYCLLVHPMASRRRQRRRQA) lie on the Cytoplasmic side of the membrane. Residues 154-174 (RVTCVLIWVVGGLLSIPTFLL) form a helical membrane-spanning segment. The Extracellular segment spans residues 175–206 (RSIQAVPDLNITACILLLPHEAWHFARIVELN). N-linked (GlcNAc...) asparagine glycosylation occurs at Asn184. Residues 207 to 227 (ILAFLLPLAAIVFFNYHILAS) traverse the membrane as a helical segment. The Cytoplasmic segment spans residues 228 to 250 (LRGREEVSRTRCGGRKDSKTTAL). A helical membrane pass occupies residues 251-271 (ILTLVVAFLVCWAPYHFFAFL). Over 272 to 294 (EFLFQVQAIRGCFWEDFIDLGLQ) the chain is Extracellular. The helical transmembrane segment at 295–315 (LANFLAFTNSSLNPVIYVFVG) threads the bilayer. The Cytoplasmic portion of the chain corresponds to 316-352 (RLFRTKVWELYKQCTPKSLAPISSSHRKEIFQLFWRN). Cys329 carries S-palmitoyl cysteine lipidation.

The protein belongs to the G-protein coupled receptor 1 family. Bradykinin receptor subfamily. BDKRB1 sub-subfamily.

Its subcellular location is the cell membrane. This is a receptor for bradykinin. Could be a factor in chronic pain and inflammation. In Chlorocebus aethiops (Green monkey), this protein is B1 bradykinin receptor (BDKRB1).